A 143-amino-acid polypeptide reads, in one-letter code: Nucleoside diphosphate kinase (143 aa).

ATP is bound by residues Lys-11, Phe-59, Arg-87, Thr-93, Arg-104, and Asn-114. The active-site Pros-phosphohistidine intermediate is His-117.

This sequence belongs to the NDK family. In terms of assembly, homotetramer. Mg(2+) is required as a cofactor.

The protein localises to the cytoplasm. The enzyme catalyses a 2'-deoxyribonucleoside 5'-diphosphate + ATP = a 2'-deoxyribonucleoside 5'-triphosphate + ADP. It carries out the reaction a ribonucleoside 5'-diphosphate + ATP = a ribonucleoside 5'-triphosphate + ADP. In terms of biological role, major role in the synthesis of nucleoside triphosphates other than ATP. The ATP gamma phosphate is transferred to the NDP beta phosphate via a ping-pong mechanism, using a phosphorylated active-site intermediate. In Shewanella halifaxensis (strain HAW-EB4), this protein is Nucleoside diphosphate kinase.